We begin with the raw amino-acid sequence, 311 residues long: MSNASLLTAFILMGLPHAPALDAPLFGVFLVVYVLTVLGNLLILLVIRVDSHLHTTMYYFLTNLSFIDMWFSTVTVPKLLMTLVFPSGRAISFHSCMAQLYFFHFLGGTECFLYRVMSCDRYLAISYPLRYTSMMTGRSCTLLATSTWLSGSLHSAVQAILTFHLPYCGPNWIQHYLCDAPPILKLACADTSAIETVIFVTVGIVASGCFVLIVLSYVSIVCSILRIRTSEGKHRAFQTCASHCIVVLCFFGPGLFIYLRPGSRKAVDGVVAVFYTVLTPLLNPVVYTLRNKEVKKALLKLKDKVAHSQSK.

Residues 1–23 lie on the Extracellular side of the membrane; it reads MSNASLLTAFILMGLPHAPALDA. The N-linked (GlcNAc...) asparagine glycan is linked to N3. A helical membrane pass occupies residues 24-44; sequence PLFGVFLVVYVLTVLGNLLIL. Residues 45–52 lie on the Cytoplasmic side of the membrane; that stretch reads LVIRVDSH. A helical membrane pass occupies residues 53 to 73; it reads LHTTMYYFLTNLSFIDMWFST. Topologically, residues 74–98 are extracellular; sequence VTVPKLLMTLVFPSGRAISFHSCMA. C96 and C188 are oxidised to a cystine. Residues 99 to 119 traverse the membrane as a helical segment; it reads QLYFFHFLGGTECFLYRVMSC. The Cytoplasmic portion of the chain corresponds to 120–138; that stretch reads DRYLAISYPLRYTSMMTGR. The chain crosses the membrane as a helical span at residues 139–159; sequence SCTLLATSTWLSGSLHSAVQA. The Extracellular segment spans residues 160-196; the sequence is ILTFHLPYCGPNWIQHYLCDAPPILKLACADTSAIET. A helical membrane pass occupies residues 197 to 216; sequence VIFVTVGIVASGCFVLIVLS. Residues 217 to 236 lie on the Cytoplasmic side of the membrane; that stretch reads YVSIVCSILRIRTSEGKHRA. A helical transmembrane segment spans residues 237–257; the sequence is FQTCASHCIVVLCFFGPGLFI. Over 258-268 the chain is Extracellular; it reads YLRPGSRKAVD. A helical transmembrane segment spans residues 269-289; the sequence is GVVAVFYTVLTPLLNPVVYTL. Residues 290–311 lie on the Cytoplasmic side of the membrane; the sequence is RNKEVKKALLKLKDKVAHSQSK.

It belongs to the G-protein coupled receptor 1 family.

It localises to the cell membrane. Its function is as follows. Odorant receptor. This is Olfactory receptor 10G8 (OR10G8) from Homo sapiens (Human).